A 397-amino-acid polypeptide reads, in one-letter code: Teichoic acid D-alanine hydrolase (397 aa).

The signal sequence occupies residues 1–23 (MKFNKVKLVIHACVLLFIIISIA).

The protein resides in the cell membrane. The catalysed reaction is [(4-D-Ala)-(2-GlcNAc)-Rib-ol-P]n-[Gro-P]m-beta-D-ManNAc-(1-&gt;4)-alpha-D-GlcNAc-P-peptidoglycan + n H2O = [(2-GlcNAc)-Rib-ol-P]n-[Gro-P]m-beta-D-ManNAc-(1-&gt;4)-alpha-D-GlcNAc-P-peptidoglycan + n D-alanine.. Functionally, catalyzes the liberation of D-alanyl moieties present on wall teichoic acid (WTA) and lipoteichoic acid (LTA). Affects the methicillin resistance level and autolysis in the presence of Triton X-100 as well as the cell wall structure. This chain is Teichoic acid D-alanine hydrolase (fmtA), found in Staphylococcus aureus (strain Mu50 / ATCC 700699).